Here is a 341-residue protein sequence, read N- to C-terminus: BZIP domain-containing transcription factor BZP4 (341 aa).

Polar residues-rich tracts occupy residues 1–32 (MESSWPAQSSFSYYNQGSMQTSSRHASSPTNE), 61–76 (LTESGGDSLPSFSHSL), 128–139 (PLTSHSRSQITH), and 150–163 (YSSSPNLHQLSPVS). 2 disordered regions span residues 1 to 95 (MESS…PHGM) and 118 to 254 (TNHS…DKKQ). A compositionally biased stretch (low complexity) spans 178 to 192 (SPSSSSFPSSIPRTP). Basic and acidic residues-rich tracts occupy residues 225–234 (TGDRKHEKDS) and 242–254 (EEYKKLNPKDKKQ). A basic motif region spans residues 250–269 (KDKKQVRNRIGARRFRAKRK). The bZIP domain occupies 250–308 (KDKKQVRNRIGARRFRAKRKDYVNQLEAGIRLRDDEITNLQSQLESQRNEINELRLQLK). Residues 279 to 307 (IRLRDDEITNLQSQLESQRNEINELRLQL) are leucine-zipper.

It belongs to the bZIP family.

The protein resides in the nucleus. The protein localises to the cytoplasm. In terms of biological role, transcription factor that promotes the production of melanin, a pigment that serves as antioxidant, reactive oxygen species (ROS) scavenger and that protect fungal pathogens from radiation and host immune responses. The protein is BZIP domain-containing transcription factor BZP4 of Cryptococcus neoformans var. grubii serotype A (strain H99 / ATCC 208821 / CBS 10515 / FGSC 9487) (Filobasidiella neoformans var. grubii).